Here is a 146-residue protein sequence, read N- to C-terminus: 3-dehydroquinate dehydratase (146 aa).

The Proton acceptor role is filled by Y22. The substrate site is built by N73, H79, and D86. H99 serves as the catalytic Proton donor. Substrate-binding positions include 100–101 (VS) and R110.

The protein belongs to the type-II 3-dehydroquinase family. As to quaternary structure, homododecamer.

The catalysed reaction is 3-dehydroquinate = 3-dehydroshikimate + H2O. Its pathway is metabolic intermediate biosynthesis; chorismate biosynthesis; chorismate from D-erythrose 4-phosphate and phosphoenolpyruvate: step 3/7. Catalyzes a trans-dehydration via an enolate intermediate. This is 3-dehydroquinate dehydratase from Kineococcus radiotolerans (strain ATCC BAA-149 / DSM 14245 / SRS30216).